The following is a 205-amino-acid chain: Polyamine-modulated factor 1 (205 aa).

The segment at 1-28 (MAEASSVNVGSGCAEKGPEELSQEPARP) is disordered. The stretch at 140–190 (YLLQQRDALQRRVQRQEAENRQLADAVLAGRRQLEELQLQAQARQQAWQAL) forms a coiled coil.

In terms of assembly, component of the MIS12 complex composed of MIS12, DSN1, NSL1 and PMF1. Interacts with COPS7A. Interacts via its coiled-coil domain with the leucine-zipper domain of NFE2L2. The interaction with NFE2L2 is required for the transcriptional regulation of SSAT.

It localises to the nucleus. The protein localises to the chromosome. The protein resides in the centromere. It is found in the kinetochore. In terms of biological role, part of the MIS12 complex which is required for normal chromosome alignment and segregation and kinetochore formation during mitosis. May act as a cotranscription partner of NFE2L2 involved in regulation of polyamine-induced transcription of SSAT. The sequence is that of Polyamine-modulated factor 1 (PMF1) from Bos taurus (Bovine).